We begin with the raw amino-acid sequence, 138 residues long: Large ribosomal subunit protein uL16 (138 aa).

Positions 1 to 17 are enriched in basic residues; that stretch reads MLIPRKVKHRKQHHPRQ. The interval 1-24 is disordered; the sequence is MLIPRKVKHRKQHHPRQRGIASGG.

This sequence belongs to the universal ribosomal protein uL16 family. Part of the 50S ribosomal subunit.

Its function is as follows. Binds 23S rRNA and is also seen to make contacts with the A and possibly P site tRNAs. The protein is Large ribosomal subunit protein uL16 of Mycobacterium ulcerans (strain Agy99).